The chain runs to 68 residues: Ribosome modulation factor (68 aa).

The protein belongs to the ribosome modulation factor family.

Its subcellular location is the cytoplasm. Its function is as follows. During stationary phase, converts 70S ribosomes to an inactive dimeric form (100S ribosomes). The polypeptide is Ribosome modulation factor (Saccharophagus degradans (strain 2-40 / ATCC 43961 / DSM 17024)).